A 102-amino-acid polypeptide reads, in one-letter code: NADH-quinone oxidoreductase subunit K 1 (102 aa).

Helical transmembrane passes span 6-26 (LNAY…GVLV), 31-51 (LAIL…FVAF), and 65-85 (FLVI…TVLL).

Belongs to the complex I subunit 4L family. NDH-1 is composed of 14 different subunits. Subunits NuoA, H, J, K, L, M, N constitute the membrane sector of the complex.

It is found in the cell membrane. It carries out the reaction a quinone + NADH + 5 H(+)(in) = a quinol + NAD(+) + 4 H(+)(out). Functionally, NDH-1 shuttles electrons from NADH, via FMN and iron-sulfur (Fe-S) centers, to quinones in the respiratory chain. The immediate electron acceptor for the enzyme in this species is believed to be a menaquinone. Couples the redox reaction to proton translocation (for every two electrons transferred, four hydrogen ions are translocated across the cytoplasmic membrane), and thus conserves the redox energy in a proton gradient. The protein is NADH-quinone oxidoreductase subunit K 1 of Symbiobacterium thermophilum (strain DSM 24528 / JCM 14929 / IAM 14863 / T).